The primary structure comprises 273 residues: MSLTLAIYGKGGIGKSTTSSNLSAALALKGAKVLQIGCDPKHDSTFALTGTLQPTVIDVLTEVDFHHEEVSVEDVVHTGFAGVDTLESGGPPAGSGCGGYVVGETVKLLHEFGLYDKYDVIVFDVLGDVVCGGFSAPLNYADYGIIIACNDFDSIFAANRLCLAIKQKSARYRVELAGIIANRVDYELGGGTTLLEQFAETVGTRIIGRVPYHDLIRRSRLMGKTLFEMEGPGKEECTAPFLEMAEELLNRPRSTVPKPLGDREIFNVIGGWR.

ATP contacts are provided by residues glycine 12–threonine 17 and lysine 41. A Mg(2+)-binding site is contributed by serine 16. Residues cysteine 97 and cysteine 131 each coordinate [4Fe-4S] cluster. Asparagine 182 to arginine 183 lines the ATP pocket.

This sequence belongs to the NifH/BchL/ChlL family. In terms of assembly, homodimer. Protochlorophyllide reductase is composed of three subunits; BchL, BchN and BchB. [4Fe-4S] cluster serves as cofactor.

The catalysed reaction is chlorophyllide a + oxidized 2[4Fe-4S]-[ferredoxin] + 2 ADP + 2 phosphate = protochlorophyllide a + reduced 2[4Fe-4S]-[ferredoxin] + 2 ATP + 2 H2O. It functions in the pathway porphyrin-containing compound metabolism; bacteriochlorophyll biosynthesis (light-independent). Its function is as follows. Component of the dark-operative protochlorophyllide reductase (DPOR) that uses Mg-ATP and reduced ferredoxin to reduce ring D of protochlorophyllide (Pchlide) to form chlorophyllide a (Chlide). This reaction is light-independent. The L component serves as a unique electron donor to the NB-component of the complex, and binds Mg-ATP. The protein is Light-independent protochlorophyllide reductase iron-sulfur ATP-binding protein of Roseiflexus sp. (strain RS-1).